Here is a 495-residue protein sequence, read N- to C-terminus: Lysine--tRNA ligase (495 aa).

The Mg(2+) site is built by Glu-406 and Glu-413.

Belongs to the class-II aminoacyl-tRNA synthetase family. As to quaternary structure, homodimer. It depends on Mg(2+) as a cofactor.

The protein localises to the cytoplasm. The catalysed reaction is tRNA(Lys) + L-lysine + ATP = L-lysyl-tRNA(Lys) + AMP + diphosphate. This chain is Lysine--tRNA ligase, found in Leptospira borgpetersenii serovar Hardjo-bovis (strain JB197).